Here is an 876-residue protein sequence, read N- to C-terminus: Leucine--tRNA ligase (876 aa).

Residues 43–53 (PYPSGRIHMGH) carry the 'HIGH' region motif. Positions 632–636 (KMSKS) match the 'KMSKS' region motif. An ATP-binding site is contributed by Lys-635.

It belongs to the class-I aminoacyl-tRNA synthetase family.

It localises to the cytoplasm. It carries out the reaction tRNA(Leu) + L-leucine + ATP = L-leucyl-tRNA(Leu) + AMP + diphosphate. The polypeptide is Leucine--tRNA ligase (Agrobacterium fabrum (strain C58 / ATCC 33970) (Agrobacterium tumefaciens (strain C58))).